Consider the following 79-residue polypeptide: Morintide mO1 (79 aa).

The first 20 residues, 1–20, serve as a signal peptide directing secretion; that stretch reads MAKLSFLSLFLLCLVATATA. Positions 21–63 constitute a Chitin-binding type-1 domain; sequence QNCGRQAGNRACANQLCCSQYGFCGSTSEYCSRANGCQSNCRG. Disulfide bonds link C23–C38, C32–C44, C37–C51, and C57–C61. Residues 64 to 79 constitute a propeptide that is removed on maturation; that stretch reads GGGADGAGGEAGGGGP.

In terms of tissue distribution, leaves (at protein level).

Chitin-binding protein which functions in defense against chitin-containing fungal pathogens. Inhibits the growth of budding hyphae in A.alternata and A.brassiciola. The chain is Morintide mO1 from Moringa oleifera (Horseradish tree).